The primary structure comprises 142 residues: uncharacterized protein (142 aa).

Residues 1 to 120 (MADKFDANDE…TILKWEKNMD (120 aa)) form the N-acetyltransferase domain.

Belongs to the acetyltransferase family.

This is an uncharacterized protein from Streptococcus pyogenes serotype M3 (strain ATCC BAA-595 / MGAS315).